Consider the following 328-residue polypeptide: Oligopeptide transport ATP-binding protein AppD (328 aa).

Residues 5–256 (LEVNNLKTYF…PLHPYTEGLL (252 aa)) enclose the ABC transporter domain. 41 to 48 (GESGSGKS) contacts ATP.

Belongs to the ABC transporter superfamily.

It is found in the cell membrane. Functionally, this protein is a component of an oligopeptide permease, a binding protein-dependent transport system. This APP system can completely substitute for the OPP system in both sporulation and genetic competence, though, unlike OPP, is incapable of transporting tripeptides. Probably responsible for energy coupling to the transport system. This Bacillus subtilis (strain 168) protein is Oligopeptide transport ATP-binding protein AppD (appD).